Reading from the N-terminus, the 287-residue chain is Pantothenate synthetase (287 aa).

30–37 (MGNLHSGH) lines the ATP pocket. Residue His37 is the Proton donor of the active site. Gln61 contacts (R)-pantoate. Gln61 serves as a coordination point for beta-alanine. Position 149-152 (149-152 (GEKD)) interacts with ATP. Residue Gln155 coordinates (R)-pantoate. ATP-binding positions include Val178 and 186–189 (LSSR).

The protein belongs to the pantothenate synthetase family. In terms of assembly, homodimer.

It is found in the cytoplasm. It carries out the reaction (R)-pantoate + beta-alanine + ATP = (R)-pantothenate + AMP + diphosphate + H(+). The protein operates within cofactor biosynthesis; (R)-pantothenate biosynthesis; (R)-pantothenate from (R)-pantoate and beta-alanine: step 1/1. Its function is as follows. Catalyzes the condensation of pantoate with beta-alanine in an ATP-dependent reaction via a pantoyl-adenylate intermediate. The protein is Pantothenate synthetase of Pseudomonas putida (strain W619).